The chain runs to 79 residues: D-alanyl carrier protein (79 aa).

The Carrier domain occupies 1–77 (MDIKAEVIEI…KIVEGVTELR (77 aa)). S35 is subject to O-(pantetheine 4'-phosphoryl)serine.

It belongs to the DltC family. In terms of processing, 4'-phosphopantetheine is transferred from CoA to a specific serine of apo-DCP.

It localises to the cytoplasm. It participates in cell wall biogenesis; lipoteichoic acid biosynthesis. Functionally, carrier protein involved in the D-alanylation of lipoteichoic acid (LTA). The loading of thioester-linked D-alanine onto DltC is catalyzed by D-alanine--D-alanyl carrier protein ligase DltA. The DltC-carried D-alanyl group is further transferred to cell membrane phosphatidylglycerol (PG) by forming an ester bond, probably catalyzed by DltD. D-alanylation of LTA plays an important role in modulating the properties of the cell wall in Gram-positive bacteria, influencing the net charge of the cell wall. The chain is D-alanyl carrier protein from Streptococcus sanguinis (strain SK36).